The following is a 364-amino-acid chain: Fructose-bisphosphate aldolase A (364 aa).

Tyr-5 carries the phosphotyrosine modification. Thr-9 carries the phosphothreonine modification. 2 positions are modified to phosphoserine: Ser-36 and Ser-39. At Lys-42 the chain carries N6-acetyllysine; alternate. Lys-42 is covalently cross-linked (Glycyl lysine isopeptide (Lys-Gly) (interchain with G-Cter in SUMO1); alternate). Residue Lys-42 forms a Glycyl lysine isopeptide (Lys-Gly) (interchain with G-Cter in SUMO2); alternate linkage. Residue Arg-43 participates in beta-D-fructose 1,6-bisphosphate binding. A Phosphoserine modification is found at Ser-46. Lys-99 is modified (N6-(2-hydroxyisobutyryl)lysine). Residue Lys-108 is modified to N6-acetyllysine. Lys-111 is subject to N6-acetyllysine; alternate. The residue at position 111 (Lys-111) is an N6-malonyllysine; alternate. A Phosphoserine modification is found at Ser-132. Lys-147 carries the post-translational modification N6-(2-hydroxyisobutyryl)lysine. Glu-188 serves as the catalytic Proton acceptor. The active-site Schiff-base intermediate with dihydroxyacetone-P is the Lys-230. Ser-272 is subject to Phosphoserine. Beta-D-fructose 1,6-bisphosphate-binding positions include 272–274 (SGG), Ser-301, and Arg-304. Position 312 is an N6-malonyllysine (Lys-312). The residue at position 330 (Lys-330) is an N6-acetyllysine.

The protein belongs to the class I fructose-bisphosphate aldolase family. In terms of assembly, homotetramer. Interacts with SNX9 and WAS. Interacts with FBP2; the interaction blocks FBP2 inhibition by physiological concentrations of AMP and reduces inhibition by Ca(2+).

The protein resides in the cytoplasm. Its subcellular location is the myofibril. It is found in the sarcomere. The protein localises to the i band. It localises to the m line. The enzyme catalyses beta-D-fructose 1,6-bisphosphate = D-glyceraldehyde 3-phosphate + dihydroxyacetone phosphate. It functions in the pathway carbohydrate degradation; glycolysis; D-glyceraldehyde 3-phosphate and glycerone phosphate from D-glucose: step 4/4. Functionally, catalyzes the reversible conversion of beta-D-fructose 1,6-bisphosphate (FBP) into two triose phosphate and plays a key role in glycolysis and gluconeogenesis. In addition, may also function as scaffolding protein. The protein is Fructose-bisphosphate aldolase A (ALDOA) of Pan troglodytes (Chimpanzee).